A 979-amino-acid chain; its full sequence is Receptor-type tyrosine-protein phosphatase-like N (979 aa).

The first 34 residues, 1–34 (MRLPGRPGGPGGSGGLRVLLCLLLLGSRPGGCNA), serve as a signal peptide directing secretion. The interval 35 to 131 (ISAHGCLFDR…HPRDRSGLVP (97 aa)) is RESP18 homology domain. The Lumenal segment spans residues 35-575 (ISAHGCLFDR…RPAHSTSPMR (541 aa)). A disulfide bridge connects residues Cys53 and Cys62. Over residues 113-127 (IPRLRPPEPHPRDRS) the composition is skewed to basic and acidic residues. Disordered regions lie at residues 113 to 171 (IPRL…GAGS), 248 to 272 (GSKGMFGAHPGHSYGDPPGPPPAQL), 285 to 332 (SQVP…EQPD), and 391 to 466 (EQVQ…STRP). Phosphoserine occurs at positions 308 and 309. The segment covering 400 to 409 (EPPPPMPSLP) has biased composition (pro residues). A sufficient for dimerization of proICA512 region spans residues 449–575 (SPLGQNQPTM…RPAHSTSPMR (127 aa)). Positions 451–466 (LGQNQPTMAGQPSTRP) are enriched in polar residues. 2 N-linked (GlcNAc...) asparagine glycosylation sites follow: Asn506 and Asn524. The chain crosses the membrane as a helical span at residues 576–600 (SVLLTLVALAGVAGLLVALAVALCV). Residues 601–732 (RQHARQRDKE…PNTCATAQGE (132 aa)) are sufficient for dimerization of proICA512. At 601 to 979 (RQHARQRDKE…VNAILKALPQ (379 aa)) the chain is on the cytoplasmic side. Positions 643–680 (NRAEGPPEPSRVSSVSSQFSDAAQASPSSHSSTPSWCE) are disordered. Over residues 652–677 (SRVSSVSSQFSDAAQASPSSHSSTPS) the composition is skewed to low complexity. One can recognise a Tyrosine-protein phosphatase domain in the interval 709–969 (LAKEWQALCA…EFALTAVAEE (261 aa)). A Glycyl lysine isopeptide (Lys-Gly) (interchain with G-Cter in SUMO) cross-link involves residue Lys754.

Belongs to the protein-tyrosine phosphatase family. Receptor class 8 subfamily. As to quaternary structure, homodimer; shown for the unprocessed protein (proICA512) in the endoplasmic reticulum and resolved during protein maturation as ICA512-TMF seems to be predominantly monomeric in secretory granules; however, ICA512-CCF interacts with ICA512-TMF disrupting the ICA512-TMF:SNTB2 complex. The isolated lumenal RESP18 homology domain has been shown to form disulfide-linked homooligomers. Interacts (via cytoplasmic domain) with phosphorylated SNTB2; this protects PTPRN against cleavage by CAPN1 to produce ICA512-CCF. Dephosphorylation of SNTB2 upon insulin stimulation disrupts the interaction and results in PTPRN cleavage. Interacts with SNX19. ICA512-CCF interacts with PIAS4; in the nucleus. Interacts with STAT5B (phosphorylated); down-regulated by ICA512-CCF sumoylation; ICA512-CCF prevents STAT5B dephosphorylation; ICA512-CCF mediates interaction of STAT5B with PIAS4. Interacts (via RESP18 homology domain) with insulin and proinsulin. Interacts with PTPRN2, PTPRA and PTPRE. N-glycosylated. In terms of processing, O-glycosylated. Post-translationally, subject to proteolytic cleavage at multiple sites. Subject to cleavage on a pair of basic residues. On exocytosis of secretory granules in pancreatic beta-cells ICA512-TMF is transiently inserted in the plasma-membrane and cleaved by mu-type calpain CPN1 to yield ICA512-CCF. Sumoylated at two sites including Lys-754. Sumoylation decreases interaction with STAT5. In terms of tissue distribution, detected in pituitary (at protein level).

Its subcellular location is the membrane. The protein localises to the cytoplasmic vesicle. It localises to the secretory vesicle membrane. It is found in the perikaryon. The protein resides in the cell projection. Its subcellular location is the axon. The protein localises to the synapse. It localises to the cell membrane. It is found in the endosome. The protein resides in the nucleus. Functionally, plays a role in vesicle-mediated secretory processes. Required for normal accumulation of secretory vesicles in hippocampus, pituitary and pancreatic islets. Required for the accumulation of normal levels of insulin-containing vesicles and preventing their degradation. Plays a role in insulin secretion in response to glucose stimuli. Required for normal accumulation of the neurotransmitters norepinephrine, dopamine and serotonin in the brain. In females, but not in males, required for normal accumulation and secretion of pituitary hormones, such as luteinizing hormone (LH) and follicle-stimulating hormone (FSH). Required to maintain normal levels of renin expression and renin release. Seems to lack intrinsic enzyme activity. May regulate catalytic active protein-tyrosine phosphatases such as PTPRA through dimerization. ICA512-TMF regulates dynamics and exocytosis of insulin secretory granules (SGs); binding of ICA512-TMF to SNTB2/beta-2-syntrophin is proposed to restrain SGs mobility and exocytosis by tethering them to the actin cytoskeleton depending on UTRN; the function is inhibited by cytoplasmic ICA512-CFF dimerizing with ICA512-TMF and displacing SNTB2. Its function is as follows. ICA512-CCF translocated to the nucleus promotes expression of insulin and other granule-related genes; the function implicates binding to and regulating activity of STAT5B probably by preventing its dephosphorylation and potentially by inducing its sumoylation by recruiting PIAS4. Enhances pancreatic beta-cell proliferation by converging with signaling by STAT5B and STAT3. ICA512-CCF located in the cytoplasm regulates dynamics and exocytosis of insulin secretory granules (SGs) by dimerizing with ICA512-TMF and displacing SNTB2 thus enhancing SGs mobility and exocytosis. This is Receptor-type tyrosine-protein phosphatase-like N (PTPRN) from Bos taurus (Bovine).